A 32-amino-acid chain; its full sequence is VVIKTLVFQSESNNSFVELIPMKPLNLRAFXL.

The Pentraxin (PTX) domain maps to 2–32 (VIKTLVFQSESNNSFVELIPMKPLNLRAFXL).

This sequence belongs to the pentraxin family. As to quaternary structure, homopentamer. Pentraxin (or pentaxin) have a discoid arrangement of 5 non-covalently bound subunits. Glycosylated.

The protein resides in the secreted. Functionally, displays several functions associated with host defense: it promotes agglutination, bacterial capsular swelling, phagocytosis, and complement fixation through its calcium-dependent binding to phosphorylcholine. The protein is C-reactive protein of Pleuronectes platessa (European plaice).